A 293-amino-acid polypeptide reads, in one-letter code: Sec-independent protein translocase protein TatC (293 aa).

A run of 6 helical transmembrane segments spans residues 35–55 (AAIA…QPFI), 87–107 (LLKV…LYQA), 123–143 (LFGF…ISYF), 173–193 (ILKF…LVGI), 204–224 (ILKS…LTAP), and 228–248 (IMMM…AIGI).

Belongs to the TatC family. The Tat system comprises two distinct complexes: a TatABC complex, containing multiple copies of TatA, TatB and TatC subunits, and a separate TatA complex, containing only TatA subunits. Substrates initially bind to the TatABC complex, which probably triggers association of the separate TatA complex to form the active translocon.

It localises to the cell membrane. Its function is as follows. Part of the twin-arginine translocation (Tat) system that transports large folded proteins containing a characteristic twin-arginine motif in their signal peptide across membranes. Together with TatB, TatC is part of a receptor directly interacting with Tat signal peptides. The polypeptide is Sec-independent protein translocase protein TatC (Rothia mucilaginosa (strain DY-18) (Stomatococcus mucilaginosus)).